A 180-amino-acid chain; its full sequence is Large ribosomal subunit protein uL5 (180 aa).

This sequence belongs to the universal ribosomal protein uL5 family. As to quaternary structure, part of the 50S ribosomal subunit; part of the 5S rRNA/L5/L18/L25 subcomplex. Contacts the 5S rRNA and the P site tRNA. Forms a bridge to the 30S subunit in the 70S ribosome.

This is one of the proteins that bind and probably mediate the attachment of the 5S RNA into the large ribosomal subunit, where it forms part of the central protuberance. In the 70S ribosome it contacts protein S13 of the 30S subunit (bridge B1b), connecting the 2 subunits; this bridge is implicated in subunit movement. Contacts the P site tRNA; the 5S rRNA and some of its associated proteins might help stabilize positioning of ribosome-bound tRNAs. This is Large ribosomal subunit protein uL5 from Ralstonia nicotianae (strain ATCC BAA-1114 / GMI1000) (Ralstonia solanacearum).